A 116-amino-acid chain; its full sequence is Large ribosomal subunit protein uL18 (116 aa).

This sequence belongs to the universal ribosomal protein uL18 family. In terms of assembly, part of the 50S ribosomal subunit; part of the 5S rRNA/L5/L18/L25 subcomplex. Contacts the 5S and 23S rRNAs.

Its function is as follows. This is one of the proteins that bind and probably mediate the attachment of the 5S RNA into the large ribosomal subunit, where it forms part of the central protuberance. This chain is Large ribosomal subunit protein uL18, found in Chromohalobacter salexigens (strain ATCC BAA-138 / DSM 3043 / CIP 106854 / NCIMB 13768 / 1H11).